Consider the following 278-residue polypeptide: Myb/SANT-like DNA-binding domain-containing protein 1 (278 aa).

The 88-residue stretch at Arg44–Ile131 folds into the Myb-like domain. A disordered region spans residues Cys139–Thr167. The span at Pro149–Ser166 shows a compositional bias: polar residues.

This Mus musculus (Mouse) protein is Myb/SANT-like DNA-binding domain-containing protein 1 (Msantd1).